The primary structure comprises 702 residues: Elongation factor G 2 (702 aa).

The tr-type G domain maps to 8–285; sequence DMVRNIGISA…AVTYYLPSPA (278 aa). GTP is bound by residues 17–24, 84–88, and 138–141; these read AHIDSGKT, DTPGH, and NKLD.

Belongs to the TRAFAC class translation factor GTPase superfamily. Classic translation factor GTPase family. EF-G/EF-2 subfamily.

The protein resides in the cytoplasm. Catalyzes the GTP-dependent ribosomal translocation step during translation elongation. During this step, the ribosome changes from the pre-translocational (PRE) to the post-translocational (POST) state as the newly formed A-site-bound peptidyl-tRNA and P-site-bound deacylated tRNA move to the P and E sites, respectively. Catalyzes the coordinated movement of the two tRNA molecules, the mRNA and conformational changes in the ribosome. The polypeptide is Elongation factor G 2 (Bdellovibrio bacteriovorus (strain ATCC 15356 / DSM 50701 / NCIMB 9529 / HD100)).